A 766-amino-acid polypeptide reads, in one-letter code: 5-methyltetrahydropteroyltriglutamate--homocysteine methyltransferase (766 aa).

Residues Arg16 to Lys19 and Lys119 contribute to the 5-methyltetrahydropteroyltri-L-glutamate site. L-homocysteine is bound by residues Ile440–Ser442 and Glu493. Residues Ile440–Ser442 and Glu493 contribute to the L-methionine site. 5-methyltetrahydropteroyltri-L-glutamate-binding positions include Arg524–Cys525 and Trp570. L-homocysteine is bound at residue Asp608. Asp608 contributes to the L-methionine binding site. Glu614 is a 5-methyltetrahydropteroyltri-L-glutamate binding site. Zn(2+) is bound by residues His650, Cys652, and Glu674. The active-site Proton donor is His703. Zn(2+) is bound at residue Cys735.

This sequence belongs to the vitamin-B12 independent methionine synthase family. Zn(2+) serves as cofactor.

The enzyme catalyses 5-methyltetrahydropteroyltri-L-glutamate + L-homocysteine = tetrahydropteroyltri-L-glutamate + L-methionine. The protein operates within amino-acid biosynthesis; L-methionine biosynthesis via de novo pathway; L-methionine from L-homocysteine (MetE route): step 1/1. Catalyzes the transfer of a methyl group from 5-methyltetrahydrofolate to homocysteine resulting in methionine formation. The sequence is that of 5-methyltetrahydropteroyltriglutamate--homocysteine methyltransferase from Pseudomonas aeruginosa (strain LESB58).